The chain runs to 202 residues: uncharacterized protein (202 aa).

The protein localises to the mitochondrion. This is an uncharacterized protein from Schizosaccharomyces pombe (strain 972 / ATCC 24843) (Fission yeast).